Consider the following 101-residue polypeptide: Ascorbate-specific PTS system EIIB component (101 aa).

The region spanning 3 to 96 (VRILAVCGNG…KLLEVIKAHF (94 aa)) is the PTS EIIB type-2 domain. Cysteine 9 serves as the catalytic Phosphocysteine intermediate. Phosphocysteine is present on cysteine 9.

It is found in the cytoplasm. The enzyme catalyses N(pros)-phospho-L-histidyl-[protein] + L-ascorbate(out) = L-ascorbate 6-phosphate(in) + L-histidyl-[protein]. In terms of biological role, the phosphoenolpyruvate-dependent sugar phosphotransferase system (sugar PTS), a major carbohydrate active transport system, catalyzes the phosphorylation of incoming sugar substrates concomitantly with their translocation across the cell membrane. The enzyme II UlaABC PTS system is involved in ascorbate transport. This is Ascorbate-specific PTS system EIIB component (ulaB) from Escherichia coli O6:H1 (strain CFT073 / ATCC 700928 / UPEC).